We begin with the raw amino-acid sequence, 407 residues long: Protease ElaD (407 aa).

Residue His-231 is part of the active site. Cys-317 functions as the Nucleophile in the catalytic mechanism.

Belongs to the peptidase C79 family.

Protease that can act as an efficient and specific deubiquitinating enzyme in vitro. Does not possess desumoylating and deneddylating activities. The physiological substrate is unknown. This Escherichia coli O157:H7 protein is Protease ElaD (elaD).